The sequence spans 1734 residues: Gag-Pol polyprotein (1734 aa).

G2 carries N-myristoyl glycine; by host lipidation. The PTAP/PSAP motif signature appears at 109–112; it reads PTAP. A disordered region spans residues 112 to 217; it reads PILPSGPSTQ…STTSRAFPLR (106 aa). An LYPX(n)L motif motif is present at residues 128-132; it reads LYPAL. The PPXY motif signature appears at 161–164; that stretch reads PPPY. A Phosphoserine; by host modification is found at S191. The tract at residues 344 to 392 is interaction with host PIAS4; sequence GRSPTNLAKVKGITQGPNESPSAFLERLKEAYRRYTPYDPEDHGQETSV. Positions 429–434 are interaction with host UBE2I; that stretch reads IFNKRE. 2 stretches are compositionally biased toward basic and acidic residues: residues 433–474 and 485–498; these read RETP…REMS and RQDRQGGERKRPQL. Disordered regions lie at residues 433–498 and 512–551; these read RETP…RPQL and WAKDCPKKPRGPRGPRPQTSLLTLDDQGGQGQEPPPEPRI. Residues 437 to 477 adopt a coiled-coil conformation; that stretch reads EEREERFRRETEENEERRRAEDEQREKERDRRRQREMSKLL. The segment at 501 to 518 adopts a CCHC-type zinc-finger fold; that stretch reads DQCAYCKEKGHWAKDCPK. One can recognise a Peptidase A2 domain in the interval 560–630; that stretch reads VTFLVDTGAQ…CPYPLLGRDL (71 aa). The Protease; shared with dimeric partner role is filled by D565. The 192-residue stretch at 740-931 folds into the Reverse transcriptase domain; sequence LDQGILVPCQ…KQVKYLGYLL (192 aa). The Mg(2+) site is built by D808, D882, D883, D1182, E1220, D1241, and D1311. In terms of domain architecture, RNase H type-1 spans 1173-1319; sequence PDADHTWYTD…ADQAAREAAI (147 aa). The HHCC-type zinc finger occupies 1386 to 1426; the sequence is HRLTHLGYQKMKALLDRGESPYYMLNRDKTLQYVADSCTVC. The Integrase catalytic domain occupies 1443-1601; it reads RGHRPGTHWE…TPYEILYGAP (159 aa). The Mg(2+) site is built by D1454 and D1513.

The protein belongs to the retroviral Pol polyprotein family. In terms of assembly, homohexamer; further associates as homomultimer. The virus core is composed of a lattice formed from hexagonal rings, each containing six capsid monomers. Interacts with mouse UBE2I and mouse PIAS4. As to quaternary structure, interacts (via PPXY motif) with host NEDD4. Interacts (via PSAP motif) with host TSG101. Interacts (via LYPX(n)L motif) with host PDCD6IP. The reverse transcriptase is a monomer (Potential). Interacts (via RNase domains) with host release factor ETF1; this interaction is essential for translational readthrough of amber codon between viral gag and pol genes, as well as for viral replication. In terms of assembly, homodimer. It depends on Mg(2+) as a cofactor. In terms of processing, ubiquitinated by ITCH. Gag can recruit the ubiquitin ligase Itch in an L domain-independent manner to facilitate virus release via a mechanism that involves Gag ubiquitination. Post-translationally, specific enzymatic cleavages by the viral protease yield mature proteins. The protease is released by autocatalytic cleavage. The polyprotein is cleaved during and after budding, this process is termed maturation. Sumoylated; which is required for virus replication. In terms of processing, phosphorylated on serine residues.

It is found in the virion. It localises to the host cell membrane. Its subcellular location is the host late endosome membrane. The protein localises to the host endosome. The protein resides in the host multivesicular body. It is found in the host cytoplasm. It catalyses the reaction DNA(n) + a 2'-deoxyribonucleoside 5'-triphosphate = DNA(n+1) + diphosphate. The catalysed reaction is Endonucleolytic cleavage to 5'-phosphomonoester.. Most efficiently inhibited by Amprenavir, which is able to block Gag-Pol processing in infected cells. In terms of biological role, plays a role in budding and is processed by the viral protease during virion maturation outside the cell. During budding, it recruits, in a PPXY-dependent or independent manner, Nedd4-like ubiquitin ligases that conjugate ubiquitin molecules to Gag-Pol, or to Gag-Pol binding host factors. Interaction with HECT ubiquitin ligases probably links the viral protein to the host ESCRT pathway and facilitates release. Functionally, targets Gag and gag-pol polyproteins to the plasma membrane via a multipartite membrane binding signal, that includes its myristoylated N-terminus. Also mediates nuclear localization of the pre-integration complex. Its function is as follows. Constituent of the pre-integration complex (PIC) which tethers the latter to mitotic chromosomes. This allows the integration of the viral genome into the host DNA. Forms the spherical core of the virion that encapsulates the genomic RNA-nucleocapsid complex. In terms of biological role, involved in the packaging and encapsidation of two copies of the genome. Binds with high affinity to conserved UCUG elements within the packaging signal, located near the 5'-end of the genome. This binding is dependent on genome dimerization. Acts as a nucleic acid chaperone which is involved in rearrangement of nucleic acid secondary structures during gRNA retrotranscription. Functionally, the aspartyl protease mediates proteolytic cleavages of Gag and Gag-Pol polyproteins during or shortly after the release of the virion from the plasma membrane. Cleavages take place as an ordered, step-wise cascade to yield mature proteins. This process is called maturation. Displays maximal activity during the budding process just prior to particle release from the cell (Potential). Cleaves the translation initiation factor eIF4G leading to the inhibition of host cap-dependent translation. Its function is as follows. RT is a multifunctional enzyme that converts the viral dimeric RNA genome into dsDNA in the cytoplasm, shortly after virus entry into the cell. This enzyme displays a DNA polymerase activity that can copy either DNA or RNA templates, and a ribonuclease H (RNase H) activity that cleaves the RNA strand of RNA-DNA heteroduplexes in a partially processive 3' to 5' endonucleasic mode. Conversion of viral genomic RNA into dsDNA requires many steps. A tRNA binds to the primer-binding site (PBS) situated at the 5' end of the viral RNA. RT uses the 3' end of the tRNA primer to perform a short round of RNA-dependent minus-strand DNA synthesis. The reading proceeds through the U5 region and ends after the repeated (R) region which is present at both ends of viral RNA. The portion of the RNA-DNA heteroduplex is digested by the RNase H, resulting in a ssDNA product attached to the tRNA primer. This ssDNA/tRNA hybridizes with the identical R region situated at the 3' end of viral RNA. This template exchange, known as minus-strand DNA strong stop transfer, can be either intra- or intermolecular. RT uses the 3' end of this newly synthesized short ssDNA to perform the RNA-dependent minus-strand DNA synthesis of the whole template. RNase H digests the RNA template except for a polypurine tract (PPT) situated at the 5' end of the genome. It is not clear if both polymerase and RNase H activities are simultaneous. RNase H probably can proceed both in a polymerase-dependent (RNA cut into small fragments by the same RT performing DNA synthesis) and a polymerase-independent mode (cleavage of remaining RNA fragments by free RTs). Secondly, RT performs DNA-directed plus-strand DNA synthesis using the PPT that has not been removed by RNase H as primers. PPT and tRNA primers are then removed by RNase H. The 3' and 5' ssDNA PBS regions hybridize to form a circular dsDNA intermediate. Strand displacement synthesis by RT to the PBS and PPT ends produces a blunt ended, linear dsDNA copy of the viral genome that includes long terminal repeats (LTRs) at both ends. Catalyzes viral DNA integration into the host chromosome, by performing a series of DNA cutting and joining reactions. This enzyme activity takes place after virion entry into a cell and reverse transcription of the RNA genome in dsDNA. The first step in the integration process is 3' processing. This step requires a complex comprising the viral genome, matrix protein and integrase. This complex is called the pre-integration complex (PIC). The integrase protein removes 2 nucleotides from each 3' end of the viral DNA, leaving recessed CA OH's at the 3' ends. In the second step that requires cell division, the PIC enters cell nucleus. In the third step, termed strand transfer, the integrase protein joins the previously processed 3' ends to the 5' ends of strands of target cellular DNA at the site of integration. The last step is viral DNA integration into host chromosome. This chain is Gag-Pol polyprotein (pol), found in Mus musculus (Mouse).